A 179-amino-acid polypeptide reads, in one-letter code: Inner membrane-spanning protein YciB (179 aa).

Helical transmembrane passes span 22–42 (IYAA…YSWV), 50–70 (MALI…FFHN), 76–96 (WKVT…QWVM), 121–141 (LAWA…AFWL), and 149–169 (FKVF…GVYI).

The protein belongs to the YciB family.

The protein resides in the cell inner membrane. Functionally, plays a role in cell envelope biogenesis, maintenance of cell envelope integrity and membrane homeostasis. The chain is Inner membrane-spanning protein YciB from Salmonella arizonae (strain ATCC BAA-731 / CDC346-86 / RSK2980).